The sequence spans 428 residues: Cell division cycle 20.6, cofactor of APC complex (428 aa).

WD repeat units lie at residues 106-145 (WFLT…TSKL), 150-189 (DENG…HVRT), 193-230 (GHES…SIIG), 234-273 (GHTE…SNPT), 282-324 (EHTA…CLNS), 326-367 (ETGS…KMAE), and 370-409 (GHTS…PKTT).

This sequence belongs to the WD repeat CDC20/Fizzy family. As to quaternary structure, the APC/C is composed of at least 11 subunits that stay tightly associated throughout the cell cycle.

Its subcellular location is the nucleus. It participates in protein modification; protein ubiquitination. Functionally, component of the anaphase promoting complex/cyclosome (APC/C), a cell cycle-regulated E3 ubiquitin-protein ligase complex that controls progression through mitosis and the G1 phase of the cell cycle. The chain is Cell division cycle 20.6, cofactor of APC complex (CDC20-6) from Arabidopsis thaliana (Mouse-ear cress).